The chain runs to 565 residues: Bicyclogermacrene synthase (565 aa).

4 residues coordinate Mg(2+): Asp317, Asp321, Asp461, and Glu469. The short motif at 317-321 is the DDXXD motif element; sequence DDTFD.

The protein belongs to the terpene synthase family. It depends on Mg(2+) as a cofactor.

The catalysed reaction is (2E,6E)-farnesyl diphosphate = bicyclogermacrene + diphosphate. The protein operates within secondary metabolite biosynthesis; terpenoid biosynthesis. Its function is as follows. Sesquiterpene synthase converting farnesyl diphosphate to bicyclogermacrene as the major product. The chain is Bicyclogermacrene synthase from Phyla dulcis (Aztec sweet herb).